A 626-amino-acid polypeptide reads, in one-letter code: Chaperone protein HtpG (626 aa).

Residues 1–341 (METKQFKAES…SEDLSLNISR (341 aa)) form an a; substrate-binding region. Residues 342-552 (EILQHDRQLK…EGELSIEMEK (211 aa)) form a b region. The disordered stretch occupies residues 490–509 (DLGIEGEEKENTSSSDDKEN). The segment covering 498 to 509 (KENTSSSDDKEN) has biased composition (basic and acidic residues). The segment at 553 to 626 (VLNAMPNNQN…FTNNICKIMK (74 aa)) is c.

This sequence belongs to the heat shock protein 90 family. Homodimer.

It is found in the cytoplasm. Functionally, molecular chaperone. Has ATPase activity. The sequence is that of Chaperone protein HtpG from Clostridium botulinum (strain Okra / Type B1).